Consider the following 239-residue polypeptide: Uridylate kinase (239 aa).

13–16 (KLSG) lines the ATP pocket. G55 is a binding site for UMP. Residues G56 and R60 each contribute to the ATP site. UMP contacts are provided by residues D75 and 136-143 (TGNPFFTT). Residues T163, N164, Y169, and D172 each contribute to the ATP site.

The protein belongs to the UMP kinase family. Homohexamer.

It localises to the cytoplasm. It carries out the reaction UMP + ATP = UDP + ADP. Its pathway is pyrimidine metabolism; CTP biosynthesis via de novo pathway; UDP from UMP (UMPK route): step 1/1. Inhibited by UTP. Functionally, catalyzes the reversible phosphorylation of UMP to UDP. In Neisseria gonorrhoeae (strain ATCC 700825 / FA 1090), this protein is Uridylate kinase.